The following is a 74-amino-acid chain: Large ribosomal subunit protein bL28 (74 aa).

It belongs to the bacterial ribosomal protein bL28 family.

This chain is Large ribosomal subunit protein bL28, found in Buchnera aphidicola subsp. Baizongia pistaciae (strain Bp).